A 573-amino-acid chain; its full sequence is Oxygen sensor histidine kinase response regulator DosT (573 aa).

GAF domains are found at residues 61-198 (KLDA…GIAV) and 229-366 (DPAM…ALAW). His-147 is a binding site for heme. The Histidine kinase domain maps to 380–573 (ILTDRDRIAR…TLLRWSAPLR (194 aa)). His-392 is modified (phosphohistidine; by autocatalysis).

It depends on Mg(2+) as a cofactor. The cofactor is heme.

It is found in the cytoplasm. Its function is as follows. Interacts with the two-component regulatory system DevR/DevS (DosR/DosS) involved in onset of the dormancy response. Required for full induction of the DevR (DosR) regulon; required during early adaptation to anaerobiosis, to start induction of the DevR regulon. May act as a direct hypoxia/oxygen sensor. May be the secondary sensor for CO. Donates a phosphate group to DevR (DosR). The protein is Oxygen sensor histidine kinase response regulator DosT (dosT) of Mycobacterium tuberculosis (strain CDC 1551 / Oshkosh).